We begin with the raw amino-acid sequence, 341 residues long: Holliday junction branch migration complex subunit RuvB (341 aa).

The interval 3–184 is large ATPase domain (RuvB-L); it reads DDFDIRDARM…FGINMHLEYY (182 aa). ATP is bound by residues L23, R24, G65, K68, T69, T70, 131–133, R174, Y184, and R221; that span reads EDY. T69 is a binding site for Mg(2+). A small ATPAse domain (RuvB-S) region spans residues 185-255; that stretch reads DMETLTKIVL…IACFSLEALN (71 aa). The tract at residues 258–341 is head domain (RuvB-H); that stretch reads RYGLDQIDNK…RVGEQGFLFD (84 aa). DNA-binding residues include R313 and R318.

It belongs to the RuvB family. Homohexamer. Forms an RuvA(8)-RuvB(12)-Holliday junction (HJ) complex. HJ DNA is sandwiched between 2 RuvA tetramers; dsDNA enters through RuvA and exits via RuvB. An RuvB hexamer assembles on each DNA strand where it exits the tetramer. Each RuvB hexamer is contacted by two RuvA subunits (via domain III) on 2 adjacent RuvB subunits; this complex drives branch migration. In the full resolvosome a probable DNA-RuvA(4)-RuvB(12)-RuvC(2) complex forms which resolves the HJ.

Its subcellular location is the cytoplasm. It catalyses the reaction ATP + H2O = ADP + phosphate + H(+). The RuvA-RuvB-RuvC complex processes Holliday junction (HJ) DNA during genetic recombination and DNA repair, while the RuvA-RuvB complex plays an important role in the rescue of blocked DNA replication forks via replication fork reversal (RFR). RuvA specifically binds to HJ cruciform DNA, conferring on it an open structure. The RuvB hexamer acts as an ATP-dependent pump, pulling dsDNA into and through the RuvAB complex. RuvB forms 2 homohexamers on either side of HJ DNA bound by 1 or 2 RuvA tetramers; 4 subunits per hexamer contact DNA at a time. Coordinated motions by a converter formed by DNA-disengaged RuvB subunits stimulates ATP hydrolysis and nucleotide exchange. Immobilization of the converter enables RuvB to convert the ATP-contained energy into a lever motion, pulling 2 nucleotides of DNA out of the RuvA tetramer per ATP hydrolyzed, thus driving DNA branch migration. The RuvB motors rotate together with the DNA substrate, which together with the progressing nucleotide cycle form the mechanistic basis for DNA recombination by continuous HJ branch migration. Branch migration allows RuvC to scan DNA until it finds its consensus sequence, where it cleaves and resolves cruciform DNA. This Parabacteroides distasonis (strain ATCC 8503 / DSM 20701 / CIP 104284 / JCM 5825 / NCTC 11152) protein is Holliday junction branch migration complex subunit RuvB.